We begin with the raw amino-acid sequence, 533 residues long: MKQIWQALKAHQQAVEHRAILDLFADPRRAETFSTRLGDMLFDWSKTNIDHTARDLLIDLAGAAGVAEKREAMFSGAKINETEGRAVLHTALRNMDRPVRVDGVDVTPALRETHARMQAFVRDLRSGRFKGQGGPITDVVNIGIGGSDLGPAMACLALAPYADGPRCQFVSNVDGAHIHDTLKDLDPATTLVIVASKTFTTIETMTNAETAKRWMATRVSDPAAQFAAVSTAADRTAAFGIDASRVFGFEDWVGGRYSMWGPIGLALMIAIGPEEFDAFLAGGAEMDRHFREAPFAENLPVLLALVGLWHNQICGHATRAVLPYDQRLARLPAYLQQLEMESNGKRVAMDGHELTHHSGPIVWGEPGTNGQHAFYQLIHQGSRIVPCEFLVAREGHEPDLAHQHLLLVSNCLAQSEALLRGRSVEEARAILARKGLTGSELERQARHRVFPGNRPSTVLAYEKLTPATLGRIVALYEHRVFVEGVILGINSYDQWGVELGKELALALQPMLEGRAGTEGKDGSTAQLVSYLRC.

Residue glutamate 341 is the Proton donor of the active site. Active-site residues include histidine 372 and lysine 501.

This sequence belongs to the GPI family.

Its subcellular location is the cytoplasm. It carries out the reaction alpha-D-glucose 6-phosphate = beta-D-fructose 6-phosphate. The protein operates within carbohydrate biosynthesis; gluconeogenesis. It functions in the pathway carbohydrate degradation; glycolysis; D-glyceraldehyde 3-phosphate and glycerone phosphate from D-glucose: step 2/4. Catalyzes the reversible isomerization of glucose-6-phosphate to fructose-6-phosphate. The sequence is that of Glucose-6-phosphate isomerase from Cereibacter sphaeroides (strain KD131 / KCTC 12085) (Rhodobacter sphaeroides).